We begin with the raw amino-acid sequence, 330 residues long: Olfactory receptor 5T9 (330 aa).

Topologically, residues 1 to 37 (MSIHSPGYTVRRIPVNNVTDTTMFILTGFTDDADLQV) are extracellular. N17 carries an N-linked (GlcNAc...) asparagine glycan. The chain crosses the membrane as a helical span at residues 38–58 (LLFLLFFVIYLFTLIGNLGLV). The Cytoplasmic portion of the chain corresponds to 59 to 66 (LLVIGDSR). The chain crosses the membrane as a helical span at residues 67–87 (LHNPMYYFLSVLSFLDACYST). Residues 88–111 (VVTPKMLVNFISNDKSISYPGCVT) are Extracellular-facing. An intrachain disulfide couples C109 to C201. The helical transmembrane segment at 112–132 (EMFLFVTFGTTECFLLAAMAY) threads the bilayer. Topologically, residues 133–145 (DRFVAIYNPLLYA) are cytoplasmic. The chain crosses the membrane as a helical span at residues 146-166 (VKMSPRVYIPLIIACYSGGIM). Residues 167–208 (HATIHTVATFSLSFCASNEIRHVFCDIPPLLAISCSNTNINQ) lie on the Extracellular side of the membrane. The chain crosses the membrane as a helical span at residues 209 to 229 (LLLFYCVGSIEIITILIVLVS). Over 230-249 (YSFILFAILKMNSAEGRRKI) the chain is Cytoplasmic. A helical membrane pass occupies residues 250 to 270 (FSTCGSHLTGVSIYHGTILFM). Residues 271-283 (YVRPSSNYALEHD) lie on the Extracellular side of the membrane. Residues 284 to 304 (MIVSTFYTIVIPMLNPIIYSL) traverse the membrane as a helical segment. Over 305–330 (RNKDVKEAMKKIFERNFFMNKVHFKL) the chain is Cytoplasmic.

Belongs to the G-protein coupled receptor 1 family.

The protein resides in the cell membrane. Its function is as follows. Potential odorant receptor. The chain is Olfactory receptor 5T9 from Mus musculus (Mouse).